A 72-amino-acid polypeptide reads, in one-letter code: uncharacterized protein (72 aa).

The protein localises to the cytoplasm. The protein resides in the nucleus. This is an uncharacterized protein from Saccharomyces cerevisiae (strain ATCC 204508 / S288c) (Baker's yeast).